Here is a 517-residue protein sequence, read N- to C-terminus: Serine hydroxymethyltransferase 2, mitochondrial (517 aa).

Residues 1 to 31 constitute a mitochondrion transit peptide; that stretch reads MAMASALRRLSSSSNKPLQRLFNGGHLYSMS. Lys287 carries the N6-(pyridoxal phosphate)lysine modification.

This sequence belongs to the SHMT family. In terms of assembly, homotetramer. It depends on pyridoxal 5'-phosphate as a cofactor.

It is found in the mitochondrion. The enzyme catalyses (6R)-5,10-methylene-5,6,7,8-tetrahydrofolate + glycine + H2O = (6S)-5,6,7,8-tetrahydrofolate + L-serine. The protein operates within one-carbon metabolism; tetrahydrofolate interconversion. In terms of biological role, catalyzes the interconversion of serine and glycine. In Flaveria pringlei, this protein is Serine hydroxymethyltransferase 2, mitochondrial.